The following is a 338-amino-acid chain: Tryptophan--tRNA ligase (338 aa).

ATP-binding positions include 11–13 (QPS) and 19–20 (GN). Residues 12 to 20 (PSGELSIGN) carry the 'HIGH' region motif. Asp135 is a binding site for L-tryptophan. Residues 147-149 (GSD), Val189, and 198-202 (KMSKS) each bind ATP. A 'KMSKS' region motif is present at residues 198-202 (KMSKS).

It belongs to the class-I aminoacyl-tRNA synthetase family. In terms of assembly, homodimer.

It localises to the cytoplasm. It carries out the reaction tRNA(Trp) + L-tryptophan + ATP = L-tryptophyl-tRNA(Trp) + AMP + diphosphate + H(+). Catalyzes the attachment of tryptophan to tRNA(Trp). The sequence is that of Tryptophan--tRNA ligase from Vibrio cholerae serotype O1 (strain ATCC 39315 / El Tor Inaba N16961).